We begin with the raw amino-acid sequence, 581 residues long: Semenogelin-2 (581 aa).

The first 23 residues, 1 to 23 (MKSIILFVLSLLLILEKQAAVMG), serve as a signal peptide directing secretion. 4 disordered regions span residues 24–62 (QKGG…SKGS), 132–157 (GGKA…GISS), 173–194 (KEQA…QSSY), and 271–581 (NLNQ…PIST). Polar residues-rich tracts occupy residues 138–157 (GTQN…GISS) and 174–194 (EQAS…QSSY). Positions 291–310 (HTEERQLNHGEKSVQKDISK) are enriched in basic and acidic residues. Residues 324 to 333 (KSQNQVTIHS) show a composition bias toward polar residues. Basic and acidic residues predominate over residues 334-344 (QDQEHGHKENK). The span at 366–396 (KSVSKGSISIQTEEQIHGKSQNQVRIPSQAQ) shows a compositional bias: polar residues. Basic and acidic residues-rich tracts occupy residues 412 to 425 (TEER…KDIQ) and 455 to 464 (DQEHGHKENK). 2 stretches are compositionally biased toward polar residues: residues 481–497 (GKNT…SFQT) and 505–529 (SQIQ…SGQS). 2 stretches are compositionally biased toward basic and acidic residues: residues 530-545 (ADRE…KGRY) and 558-581 (TEHE…PIST).

It belongs to the semenogelin family. In terms of assembly, interacts with SERPINA5.

The protein localises to the secreted. Functionally, participates in the formation of a gel matrix (sperm coagulum) entrapping the accessory gland secretions and ejaculated spermatozoa. The protein is Semenogelin-2 (SEMG2) of Pongo abelii (Sumatran orangutan).